A 160-amino-acid polypeptide reads, in one-letter code: Interleukin-36 alpha (160 aa).

Positions 1-7 (MNKEKEL) are excised as a propeptide. A 3'-nitrotyrosine modification is found at Tyr98.

Belongs to the IL-1 family. Interacts with TMED10; the interaction mediates the translocation from the cytoplasm into the ERGIC (endoplasmic reticulum-Golgi intermediate compartment) and thereby secretion. N-terminal truncation leads to a dramatic enhancement of its activity (&gt;1000-fold). In terms of tissue distribution, highly expressed in embryonic tissue and in tissues containing epithelial cells. Elevated expression levels are detected in chronic kidney disease; expressed inepithelia from the distal convoluted tubules (DCTs) to the cortical collecting ducts (CCDs) in single nephrons (at protein level).

The protein resides in the cytoplasm. It is found in the secreted. Its function is as follows. Cytokine that binds to and signals through the IL1RL2/IL-36R receptor which in turn activates NF-kappa-B and MAPK signaling pathways in target cells linked to a pro-inflammatory response. Part of the IL-36 signaling system that is thought to be present in epithelial barriers and to take part in local inflammatory response; similar to the IL-1 system with which it shares the coreceptor IL1RAP. Seems to be involved in skin inflammatory response by acting on keratinocytes, dendritic cells and indirectly on T-cells to drive tissue infiltration, cell maturation and cell proliferation. Induces the production of pro-inflammatory cytokines, including IL-12, Il-1 beta, IL-6, TNF-alpha and IL-23 in bone marrow-derived dendritic cells (BMDCs). Involved in dendritic cell maturation by stimulating the surface expression of CD80, CD86 and MHC class II. Induces the production of IFN-gamma, IL-4 and IL-17 by cultured CD4(+) T-cells and splenocytes. May play a role in pro-inflammatory effects in the lung: induces the expression of CXCL1 and CXCL2 in the lung, and the expression of TNF-alpha, IL-36c, IL-1A, IL-1B, CXCL1 and CXCL2 in isolated splenic CD11c(+) alveolar macrophages. May be involved in T-cell maturation by stimulating the surface expression of CD40 and modestly CD80 and CD86 in splenic CD11c(+) cells. May be involved in CD4(+) T-cell proliferation. Induces NF-kappa B activation in macrophages. This Mus musculus (Mouse) protein is Interleukin-36 alpha.